The following is a 623-amino-acid chain: Sphingomyelinase C 2 (623 aa).

The first 25 residues, 1–25, serve as a signal peptide directing secretion; sequence MINKITKPKLLIGYYLLLFSLIRCL. Low complexity-rich tracts occupy residues 51–61 and 67–80; these read VNSVSINNDPA and NPASANNNQVNAVP. The disordered stretch occupies residues 51–121; the sequence is VNSVSINNDP…DPNPANLASA (71 aa). The span at 89–102 shows a compositional bias: polar residues; that stretch reads NPVNPASANSNQVN. Over residues 110–121 the composition is skewed to low complexity; the sequence is PADPNPANLASA.

Its subcellular location is the secreted. The enzyme catalyses a sphingomyelin + H2O = phosphocholine + an N-acylsphing-4-enine + H(+). In Leptospira interrogans serogroup Icterohaemorrhagiae serovar Lai (strain 56601), this protein is Sphingomyelinase C 2 (sph2).